A 203-amino-acid chain; its full sequence is Putative 3-methyladenine DNA glycosylase (203 aa).

It belongs to the DNA glycosylase MPG family.

The protein is Putative 3-methyladenine DNA glycosylase of Clostridium botulinum (strain Langeland / NCTC 10281 / Type F).